We begin with the raw amino-acid sequence, 397 residues long: Acetate kinase (397 aa).

Position 8 (Asn8) interacts with Mg(2+). ATP is bound at residue Lys15. Arg89 contacts substrate. Asp146 acts as the Proton donor/acceptor in catalysis. Residues 206–210 (HVGNG), 283–285 (DMR), and 331–335 (GMGEN) contribute to the ATP site. Glu383 is a binding site for Mg(2+).

This sequence belongs to the acetokinase family. Homodimer. Requires Mg(2+) as cofactor. Mn(2+) serves as cofactor.

It localises to the cytoplasm. The enzyme catalyses acetate + ATP = acetyl phosphate + ADP. Its pathway is metabolic intermediate biosynthesis; acetyl-CoA biosynthesis; acetyl-CoA from acetate: step 1/2. Catalyzes the formation of acetyl phosphate from acetate and ATP. Can also catalyze the reverse reaction. The sequence is that of Acetate kinase from Streptococcus agalactiae serotype III (strain NEM316).